A 327-amino-acid polypeptide reads, in one-letter code: Movement protein (327 aa).

The stretch at 297–327 (SASSSNTENELARVSQNIDLLKNKLKEICGE) forms a coiled coil.

Belongs to the caulimoviridae movement protein family. In terms of assembly, homotrimer, through the coiled-coil domain. Interacts with VAP. May interact (via N-terminus) with host prenylated Rab acceptor protein 1D (PRA1D).

The protein resides in the host cell junction. Its subcellular location is the host plasmodesma. Transports viral genome to neighboring plant cells directly through plasmosdesmata, without any budding. The movement protein allows efficient cell to cell propagation, by bypassing the host cell wall barrier. Acts by forming tubules structures that increase the size exclusion limit (SEL) of plasmodesmata, thereby allowing viral ribonucleocapsids to spread directly to neighboring cells. The protein is Movement protein of Cauliflower mosaic virus (strain W260) (CaMV).